Here is a 355-residue protein sequence, read N- to C-terminus: Protein RecA (355 aa).

67–74 contacts ATP; that stretch reads GPESSGKT.

It belongs to the RecA family.

It localises to the cytoplasm. Functionally, can catalyze the hydrolysis of ATP in the presence of single-stranded DNA, the ATP-dependent uptake of single-stranded DNA by duplex DNA, and the ATP-dependent hybridization of homologous single-stranded DNAs. It interacts with LexA causing its activation and leading to its autocatalytic cleavage. In Shewanella baltica (strain OS223), this protein is Protein RecA.